Here is a 230-residue protein sequence, read N- to C-terminus: Large ribosomal subunit protein uL1 (230 aa).

Belongs to the universal ribosomal protein uL1 family. As to quaternary structure, part of the 50S ribosomal subunit.

In terms of biological role, binds directly to 23S rRNA. The L1 stalk is quite mobile in the ribosome, and is involved in E site tRNA release. Protein L1 is also a translational repressor protein, it controls the translation of the L11 operon by binding to its mRNA. The sequence is that of Large ribosomal subunit protein uL1 from Aster yellows witches'-broom phytoplasma (strain AYWB).